A 510-amino-acid polypeptide reads, in one-letter code: 2,3-bisphosphoglycerate-independent phosphoglycerate mutase (510 aa).

Aspartate 12 contacts Mn(2+). A Phosphotyrosine modification is found at tyrosine 36. Serine 62 serves as a coordination point for Mn(2+). Serine 62 acts as the Phosphoserine intermediate in catalysis. Substrate-binding positions include histidine 123, 153–154, arginine 185, arginine 191, 261–264, and lysine 336; these read RD and RPDR. Aspartate 403, histidine 407, aspartate 444, histidine 445, and histidine 462 together coordinate Mn(2+).

This sequence belongs to the BPG-independent phosphoglycerate mutase family. As to quaternary structure, monomer. Mn(2+) serves as cofactor.

It carries out the reaction (2R)-2-phosphoglycerate = (2R)-3-phosphoglycerate. The protein operates within carbohydrate degradation; glycolysis; pyruvate from D-glyceraldehyde 3-phosphate: step 3/5. Essential for rapid growth and for sporulation. Catalyzes the interconversion of 2-phosphoglycerate and 3-phosphoglycerate. The chain is 2,3-bisphosphoglycerate-independent phosphoglycerate mutase from Halalkalibacterium halodurans (strain ATCC BAA-125 / DSM 18197 / FERM 7344 / JCM 9153 / C-125) (Bacillus halodurans).